Consider the following 307-residue polypeptide: Elongation factor Ts (307 aa).

The interval 79–82 (TDFV) is involved in Mg(2+) ion dislocation from EF-Tu.

It belongs to the EF-Ts family.

The protein localises to the cytoplasm. Functionally, associates with the EF-Tu.GDP complex and induces the exchange of GDP to GTP. It remains bound to the aminoacyl-tRNA.EF-Tu.GTP complex up to the GTP hydrolysis stage on the ribosome. In Bartonella bacilliformis (strain ATCC 35685 / KC583 / Herrer 020/F12,63), this protein is Elongation factor Ts.